We begin with the raw amino-acid sequence, 300 residues long: UDP-3-O-acyl-N-acetylglucosamine deacetylase (300 aa).

3 residues coordinate Zn(2+): His78, His237, and Asp241. His264 (proton donor) is an active-site residue.

This sequence belongs to the LpxC family. Zn(2+) serves as cofactor.

It catalyses the reaction a UDP-3-O-[(3R)-3-hydroxyacyl]-N-acetyl-alpha-D-glucosamine + H2O = a UDP-3-O-[(3R)-3-hydroxyacyl]-alpha-D-glucosamine + acetate. Its pathway is glycolipid biosynthesis; lipid IV(A) biosynthesis; lipid IV(A) from (3R)-3-hydroxytetradecanoyl-[acyl-carrier-protein] and UDP-N-acetyl-alpha-D-glucosamine: step 2/6. Functionally, catalyzes the hydrolysis of UDP-3-O-myristoyl-N-acetylglucosamine to form UDP-3-O-myristoylglucosamine and acetate, the committed step in lipid A biosynthesis. This Acinetobacter baumannii (strain AB307-0294) protein is UDP-3-O-acyl-N-acetylglucosamine deacetylase.